The chain runs to 160 residues: 2-C-methyl-D-erythritol 2,4-cyclodiphosphate synthase (160 aa).

2 residues coordinate a divalent metal cation: Asp-12 and His-14. 4-CDP-2-C-methyl-D-erythritol 2-phosphate contacts are provided by residues 12-14 and 38-39; these read DVH and HS. His-46 provides a ligand contact to a divalent metal cation. Residues 60 to 62, 65 to 69, 136 to 139, Phe-143, and Arg-146 contribute to the 4-CDP-2-C-methyl-D-erythritol 2-phosphate site; these read DIG, FPDTD, and TTTE.

This sequence belongs to the IspF family. As to quaternary structure, homotrimer. Requires a divalent metal cation as cofactor.

It carries out the reaction 4-CDP-2-C-methyl-D-erythritol 2-phosphate = 2-C-methyl-D-erythritol 2,4-cyclic diphosphate + CMP. The protein operates within isoprenoid biosynthesis; isopentenyl diphosphate biosynthesis via DXP pathway; isopentenyl diphosphate from 1-deoxy-D-xylulose 5-phosphate: step 4/6. Its function is as follows. Involved in the biosynthesis of isopentenyl diphosphate (IPP) and dimethylallyl diphosphate (DMAPP), two major building blocks of isoprenoid compounds. Catalyzes the conversion of 4-diphosphocytidyl-2-C-methyl-D-erythritol 2-phosphate (CDP-ME2P) to 2-C-methyl-D-erythritol 2,4-cyclodiphosphate (ME-CPP) with a corresponding release of cytidine 5-monophosphate (CMP). The protein is 2-C-methyl-D-erythritol 2,4-cyclodiphosphate synthase of Acinetobacter baumannii (strain AB307-0294).